Consider the following 225-residue polypeptide: NAD(P)H-quinone oxidoreductase subunit K, chloroplastic (225 aa).

4 residues coordinate [4Fe-4S] cluster: cysteine 43, cysteine 44, cysteine 108, and cysteine 139.

This sequence belongs to the complex I 20 kDa subunit family. In terms of assembly, NDH is composed of at least 16 different subunits, 5 of which are encoded in the nucleus. [4Fe-4S] cluster is required as a cofactor.

It localises to the plastid. It is found in the chloroplast thylakoid membrane. It carries out the reaction a plastoquinone + NADH + (n+1) H(+)(in) = a plastoquinol + NAD(+) + n H(+)(out). The enzyme catalyses a plastoquinone + NADPH + (n+1) H(+)(in) = a plastoquinol + NADP(+) + n H(+)(out). Its function is as follows. NDH shuttles electrons from NAD(P)H:plastoquinone, via FMN and iron-sulfur (Fe-S) centers, to quinones in the photosynthetic chain and possibly in a chloroplast respiratory chain. The immediate electron acceptor for the enzyme in this species is believed to be plastoquinone. Couples the redox reaction to proton translocation, and thus conserves the redox energy in a proton gradient. This chain is NAD(P)H-quinone oxidoreductase subunit K, chloroplastic, found in Lepidium virginicum (Virginia pepperweed).